We begin with the raw amino-acid sequence, 362 residues long: Probable protein phosphatase 2C 24 (362 aa).

A PPM-type phosphatase domain is found at 77–360 (RYGVSSVCGR…DNVSVVVIDL (284 aa)). 4 residues coordinate Mn(2+): D117, G118, D295, and D351.

Belongs to the PP2C family. Mg(2+) serves as cofactor. It depends on Mn(2+) as a cofactor.

It carries out the reaction O-phospho-L-seryl-[protein] + H2O = L-seryl-[protein] + phosphate. The catalysed reaction is O-phospho-L-threonyl-[protein] + H2O = L-threonyl-[protein] + phosphate. The chain is Probable protein phosphatase 2C 24 from Arabidopsis thaliana (Mouse-ear cress).